The primary structure comprises 469 residues: MKDLRMVFKSRITNIHFVGIAGSGMSGIAEVLHNLGYGVSGSDISQNKITDRLKEMGCQIYYKHHQDNIKNAQAVVISSAIKDNNPEVIKAHQLNIPIVPRAEMLAELMRFRFGIAIAGTHGKTTTTSIITHILNMAELDPTYIIGGILNSSGINAKLGESDYLIAEADESDASFLHLQSMLSVITNIDHEHMATYNNDYQKLKDAFVSFSANLPFYGTCIICIDDKGVNEILSDIHRPIITYGFNNGADIQAINIKQVDMQMHFDIIYDKYTKPFPIKLNLIGKHNILNTLAAIGICCELNIKVNIIQKALANFSGVARRLDYHGKLNINNLQISLFDDYGHHPKEISAVFESLKDTYQNKRLVVIFQPHRYSRTHDLFDNFTRILSTADALILLDIYPAQEKPIAHINSSTLADAIRKYSSLNPVVIKNQKKILDILPNIVHNNDVLLTLGAGDIHTLPELLKFNYT.

119-125 (GTHGKTT) is an ATP binding site.

The protein belongs to the MurCDEF family.

The protein localises to the cytoplasm. It catalyses the reaction UDP-N-acetyl-alpha-D-muramate + L-alanine + ATP = UDP-N-acetyl-alpha-D-muramoyl-L-alanine + ADP + phosphate + H(+). It functions in the pathway cell wall biogenesis; peptidoglycan biosynthesis. Its function is as follows. Cell wall formation. The protein is UDP-N-acetylmuramate--L-alanine ligase of Vesicomyosocius okutanii subsp. Calyptogena okutanii (strain HA).